A 183-amino-acid chain; its full sequence is Orotate phosphoribosyltransferase (183 aa).

5-phospho-alpha-D-ribose 1-diphosphate contacts are provided by residues R21, K88, and 112 to 120; that span reads EDVVTTGES. 2 residues coordinate orotate: T116 and R144.

The protein belongs to the purine/pyrimidine phosphoribosyltransferase family. PyrE subfamily. Homodimer. Mg(2+) serves as cofactor.

The catalysed reaction is orotidine 5'-phosphate + diphosphate = orotate + 5-phospho-alpha-D-ribose 1-diphosphate. It functions in the pathway pyrimidine metabolism; UMP biosynthesis via de novo pathway; UMP from orotate: step 1/2. Catalyzes the transfer of a ribosyl phosphate group from 5-phosphoribose 1-diphosphate to orotate, leading to the formation of orotidine monophosphate (OMP). The sequence is that of Orotate phosphoribosyltransferase from Thermus thermophilus (strain ATCC BAA-163 / DSM 7039 / HB27).